We begin with the raw amino-acid sequence, 787 residues long: ISWI one complex protein 3 (787 aa).

Residues 1–22 (MDSPSNSIQNLQQEAQGSSSAQ) are compositionally biased toward polar residues. Disordered stretches follow at residues 1–137 (MDSP…AHEQ), 672–693 (ILEQKSTTDNNPSINTNPLPKD), and 749–787 (TEYDSEEYVDDEEDDEADIYDDNDNDSSFDDGRVKRQRT). Positions 40-50 (DQSVSVSQSSD) are enriched in low complexity. Residues 79–92 (KPKRKRPAPPKKKA) show a composition bias toward basic residues. Positions 100-137 (SNDKVEKKKTTSIAKDGKPTLKTNDKKVAPKPKPAHEQ) are enriched in basic and acidic residues. Residues 675 to 689 (QKSTTDNNPSINTNP) show a composition bias toward polar residues. Positions 751 to 777 (YDSEEYVDDEEDDEADIYDDNDNDSSF) are enriched in acidic residues. The segment covering 778-787 (DDGRVKRQRT) has biased composition (basic and acidic residues).

Component of the ISW1A complex, which at least consists of ISW1 and IOC3.

The protein localises to the nucleus. Its function is as follows. Functions as a component of the ISW1A complex, which acts in remodeling the chromatin by catalyzing an ATP-dependent alteration in the structure of nucleosomal DNA. The ISW1A complex represses gene expression at initiation through specific positioning of a promoter proximal dinucleosome. The sequence is that of ISWI one complex protein 3 (IOC3) from Saccharomyces cerevisiae (strain ATCC 204508 / S288c) (Baker's yeast).